Reading from the N-terminus, the 252-residue chain is uncharacterized protein (252 aa).

2 stretches are compositionally biased toward polar residues: residues 108 to 122 (RTTM…SSSE) and 136 to 153 (MPNT…NSQS). The interval 108–252 (RTTMRQGRFP…LIWNDSSSSK (145 aa)) is disordered. A compositionally biased stretch (basic and acidic residues) spans 154 to 172 (TEKEDAMYSKDNGFEDRSK). Positions 201-226 (VKSTDSAFSGQENSEAFPSRTSNLGS) are enriched in polar residues.

Its subcellular location is the cytoplasm. It localises to the mitochondrion. It is found in the nucleus. This is an uncharacterized protein from Schizosaccharomyces pombe (strain 972 / ATCC 24843) (Fission yeast).